Reading from the N-terminus, the 420-residue chain is 3-phosphoshikimate 1-carboxyvinyltransferase (420 aa).

3-phosphoshikimate is bound by residues lysine 20, serine 21, and arginine 25. Residue lysine 20 coordinates phosphoenolpyruvate. 2 residues coordinate phosphoenolpyruvate: glycine 90 and arginine 118. Positions 159, 160, 161, 187, 303, and 330 each coordinate 3-phosphoshikimate. Glutamine 161 contributes to the phosphoenolpyruvate binding site. Aspartate 303 acts as the Proton acceptor in catalysis. Positions 334, 376, and 402 each coordinate phosphoenolpyruvate.

It belongs to the EPSP synthase family. Monomer.

The protein resides in the cytoplasm. The enzyme catalyses 3-phosphoshikimate + phosphoenolpyruvate = 5-O-(1-carboxyvinyl)-3-phosphoshikimate + phosphate. It functions in the pathway metabolic intermediate biosynthesis; chorismate biosynthesis; chorismate from D-erythrose 4-phosphate and phosphoenolpyruvate: step 6/7. Functionally, catalyzes the transfer of the enolpyruvyl moiety of phosphoenolpyruvate (PEP) to the 5-hydroxyl of shikimate-3-phosphate (S3P) to produce enolpyruvyl shikimate-3-phosphate and inorganic phosphate. The sequence is that of 3-phosphoshikimate 1-carboxyvinyltransferase from Brachyspira hyodysenteriae (strain ATCC 49526 / WA1).